The following is a 405-amino-acid chain: Tryptophan synthase beta chain (405 aa).

Residue Lys98 is modified to N6-(pyridoxal phosphate)lysine.

This sequence belongs to the TrpB family. As to quaternary structure, tetramer of two alpha and two beta chains. Pyridoxal 5'-phosphate serves as cofactor.

The enzyme catalyses (1S,2R)-1-C-(indol-3-yl)glycerol 3-phosphate + L-serine = D-glyceraldehyde 3-phosphate + L-tryptophan + H2O. The protein operates within amino-acid biosynthesis; L-tryptophan biosynthesis; L-tryptophan from chorismate: step 5/5. Functionally, the beta subunit is responsible for the synthesis of L-tryptophan from indole and L-serine. The protein is Tryptophan synthase beta chain of Xanthomonas euvesicatoria pv. vesicatoria (strain 85-10) (Xanthomonas campestris pv. vesicatoria).